A 419-amino-acid chain; its full sequence is Tyrosine--tRNA ligase (419 aa).

L-tyrosine is bound at residue Tyr-34. The 'HIGH' region signature appears at Pro-39–His-48. Tyr-169 and Gln-173 together coordinate L-tyrosine. The short motif at Lys-229–Ser-233 is the 'KMSKS' region element. Lys-232 provides a ligand contact to ATP. The S4 RNA-binding domain occupies Leu-352–Lys-419.

Belongs to the class-I aminoacyl-tRNA synthetase family. TyrS type 1 subfamily. Homodimer.

Its subcellular location is the cytoplasm. It catalyses the reaction tRNA(Tyr) + L-tyrosine + ATP = L-tyrosyl-tRNA(Tyr) + AMP + diphosphate + H(+). In terms of biological role, catalyzes the attachment of tyrosine to tRNA(Tyr) in a two-step reaction: tyrosine is first activated by ATP to form Tyr-AMP and then transferred to the acceptor end of tRNA(Tyr). In Streptococcus agalactiae serotype V (strain ATCC BAA-611 / 2603 V/R), this protein is Tyrosine--tRNA ligase.